Here is a 233-residue protein sequence, read N- to C-terminus: MAKLTKRMRVIREKVDGTKLYEINDAVALLKELATAKFVESVDVAVNLGIDPRKSDQNVRGATVLPHGTGRDVRVAVFTQGANAEAAKAAGAELVGMDDLAEQIKAGEMNFDVVIASPDAMRVVGMLGQILGPRGLMPNPKTGTVTPNVAEAVKNAKAGQVRYRNDKNGIIHTTIGKVDFTPVQLKENLEALISALKKAKPAVAKGVYVKKVSISTTMGAGVAVDQATLDTAN.

It belongs to the universal ribosomal protein uL1 family. Part of the 50S ribosomal subunit.

Its function is as follows. Binds directly to 23S rRNA. The L1 stalk is quite mobile in the ribosome, and is involved in E site tRNA release. Functionally, protein L1 is also a translational repressor protein, it controls the translation of the L11 operon by binding to its mRNA. This chain is Large ribosomal subunit protein uL1, found in Shewanella putrefaciens (strain CN-32 / ATCC BAA-453).